A 332-amino-acid polypeptide reads, in one-letter code: Sphingolipid delta(4)-desaturase DES1-like (332 aa).

3 helical membrane passes run 55–75 (PWAFLKITLVVILQLSTAAIL), 83–103 (ILSIAYFFGSFLNHNLFLAIH), and 119–139 (CLGIFANLPIGVPMSVTFQKY). The Histidine box-1 motif lies at 103–107 (HELSH). The Histidine box-2 signature appears at 140–144 (HLEHH). A run of 3 helical transmembrane segments spans residues 164 to 184 (LVTNIFAKTIWVFLQLFFYAL), 197 to 217 (WEFINFLIQIVLDVSVVLFFG), and 222 to 242 (AYLILSTFVGGGMHPMAGHFI). The Histidine box-3 signature appears at 271–275 (HNEHH).

This sequence belongs to the fatty acid desaturase type 1 family. DEGS subfamily. Specifically expressed in flowers.

It is found in the endoplasmic reticulum membrane. It catalyses the reaction an N-acylsphinganine + 2 Fe(II)-[cytochrome b5] + O2 + 2 H(+) = an N-acylsphing-4-enine + 2 Fe(III)-[cytochrome b5] + 2 H2O. Its function is as follows. Sphingolipid-delta-4-desaturase required for the biosynthesis of delta-4-unsaturated sphingolipids and derivatives. May be required for the biosynthesis of glucosylceramides. In Arabidopsis thaliana (Mouse-ear cress), this protein is Sphingolipid delta(4)-desaturase DES1-like.